A 417-amino-acid polypeptide reads, in one-letter code: MAEIKNYTLNFGPQHPAAHGVLRLVLELDGEVIQRADPHIGLLHRATEKLAESKTFIQSVPYMDRLDYVSMMVNEHGYVLAIEKLLGIEVPERAQYIRVLFDEITRVLNHLMWIGAHALDVGAMAVFLYAFREREDLMDVYEAVSGARMHAAYYRPGGVYRDLPDAMPQYKASKIRNEKALAKMNEARSGSVLDFIDDFFTRFPKCVDEYETLLTDNRIWKQRLVGIGVVSPERALQMGLTGPMLRGSGIAWDLRKKQPYEVYDRMDFDVPVGVNGDCYDRYLVRVEEMRQSIRIAKQCIEWLRKNPGPVMTDNHKVAPPSRVGMKTNMEDLIHHFKLFTEGFHVPEGEAYAAVEHPKGEFGIYLVSDGANKPYRLKIRAPGFAHLASLDEMARGHMIADAVTIIGTQDIVFGEIDR.

It belongs to the complex I 49 kDa subunit family. As to quaternary structure, NDH-1 is composed of 14 different subunits. Subunits NuoB, C, D, E, F, and G constitute the peripheral sector of the complex.

Its subcellular location is the cell inner membrane. It carries out the reaction a quinone + NADH + 5 H(+)(in) = a quinol + NAD(+) + 4 H(+)(out). NDH-1 shuttles electrons from NADH, via FMN and iron-sulfur (Fe-S) centers, to quinones in the respiratory chain. The immediate electron acceptor for the enzyme in this species is believed to be ubiquinone. Couples the redox reaction to proton translocation (for every two electrons transferred, four hydrogen ions are translocated across the cytoplasmic membrane), and thus conserves the redox energy in a proton gradient. The chain is NADH-quinone oxidoreductase subunit D from Burkholderia cenocepacia (strain HI2424).